Here is a 102-residue protein sequence, read N- to C-terminus: uncharacterized protein (102 aa).

The disordered stretch occupies residues 1-43 (MNNAHEENISSVTGFKSTSGSPAIGSSLPGRSGEGRSSSSSSG). Residues 9-21 (ISSVTGFKSTSGS) show a composition bias toward polar residues. Low complexity predominate over residues 25 to 43 (GSSLPGRSGEGRSSSSSSG).

This is an uncharacterized protein from Saccharomyces cerevisiae (strain ATCC 204508 / S288c) (Baker's yeast).